The chain runs to 89 residues: Small ribosomal subunit protein uS15 (89 aa).

Basic and acidic residues predominate over residues 1-11 (MSITAERKAEV). Residues 1-24 (MSITAERKAEVIKTNAKKAGDTGS) are disordered.

Belongs to the universal ribosomal protein uS15 family. As to quaternary structure, part of the 30S ribosomal subunit. Forms a bridge to the 50S subunit in the 70S ribosome, contacting the 23S rRNA.

Its function is as follows. One of the primary rRNA binding proteins, it binds directly to 16S rRNA where it helps nucleate assembly of the platform of the 30S subunit by binding and bridging several RNA helices of the 16S rRNA. Functionally, forms an intersubunit bridge (bridge B4) with the 23S rRNA of the 50S subunit in the ribosome. The sequence is that of Small ribosomal subunit protein uS15 from Afipia carboxidovorans (strain ATCC 49405 / DSM 1227 / KCTC 32145 / OM5) (Oligotropha carboxidovorans).